Here is a 412-residue protein sequence, read N- to C-terminus: Argininosuccinate synthase (412 aa).

ATP-binding positions include 15 to 23 and alanine 42; that span reads AYSGGLDTS. L-citrulline is bound by residues tyrosine 93 and serine 98. Glycine 123 is an ATP binding site. L-aspartate-binding residues include threonine 125, asparagine 129, and aspartate 130. Asparagine 129 is an L-citrulline binding site. 5 residues coordinate L-citrulline: arginine 133, serine 185, serine 194, glutamate 270, and tyrosine 282.

This sequence belongs to the argininosuccinate synthase family. Type 1 subfamily. As to quaternary structure, homotetramer.

The protein resides in the cytoplasm. The enzyme catalyses L-citrulline + L-aspartate + ATP = 2-(N(omega)-L-arginino)succinate + AMP + diphosphate + H(+). Its pathway is amino-acid biosynthesis; L-arginine biosynthesis; L-arginine from L-ornithine and carbamoyl phosphate: step 2/3. The protein is Argininosuccinate synthase of Psychrobacter cryohalolentis (strain ATCC BAA-1226 / DSM 17306 / VKM B-2378 / K5).